Here is a 44-residue protein sequence, read N- to C-terminus: uncharacterized protein (44 aa).

The protein localises to the plastid. Its subcellular location is the chloroplast. This is an uncharacterized protein from Trieres chinensis (Marine centric diatom).